The following is a 706-amino-acid chain: Kinesin-like protein KIF2A (706 aa).

The interval 1 to 217 is globular; the sequence is MATANFGKIQ…LDYRPLTTAD (217 aa). The interval 66–139 is disordered; the sequence is LVPDEEIEPS…AQQNGSVSDI (74 aa). The residue at position 75 (S75) is a Phosphoserine. Phosphothreonine is present on residues T78 and T97. S100 is modified (phosphoserine). Position 102 is an N6-acetyllysine (K102). Positions 123 to 139 are enriched in polar residues; that stretch reads FPEQSSSAQQNGSVSDI. A phosphoserine mark is found at S135 and S140. Residues 165-186 are disordered; it reads KLQEKREKRRLQQQELREKRAQ. The Kinesin motor domain maps to 223–553; sequence RICVCVRKRP…LRYANRVKEL (331 aa). 313–320 serves as a coordination point for ATP; it reads GQTGSGKT. A phosphoserine mark is found at D556 and Q573. A coiled-coil region spans residues 660–699; sequence ATQLEAILEQKIDILTELRDKVKSFRAALQEEEQASKQIN.

It belongs to the TRAFAC class myosin-kinesin ATPase superfamily. Kinesin family. MCAK/KIF2 subfamily. As to quaternary structure, interacts with AURKA and PLK1. Interacts with PSRC1. Interacts with MCRS1; the interaction enhances recruitment of KIF2A to the minus ends of spindle microtubules which promotes chromosome alignment.

The protein resides in the cytoplasm. Its subcellular location is the cytoskeleton. It localises to the microtubule organizing center. It is found in the centrosome. The protein localises to the spindle pole. The protein resides in the spindle. Its function is as follows. Plus end-directed microtubule-dependent motor required for normal brain development. May regulate microtubule dynamics during axonal growth. Required for normal progression through mitosis. Required for normal congress of chromosomes at the metaphase plate. Required for normal spindle dynamics during mitosis. Promotes spindle turnover. Implicated in formation of bipolar mitotic spindles. Has microtubule depolymerization activity. The protein is Kinesin-like protein KIF2A (KIF2A) of Homo sapiens (Human).